A 145-amino-acid chain; its full sequence is MIGLIQRVSEASVCVGNEVIGEINQGILLLLGVEKNDNEEKAKKLFQRVLNYRIFSDQDSKMNLNLQQVGGGLLVVSQFTLVAQTNKGNRPGFSQGASPELGKTLYNYFVELGRSSEILCESGKFGADMQVRLINDGPVTFSLNV.

Residues 137–138 (GP) carry the Gly-cisPro motif, important for rejection of L-amino acids motif.

It belongs to the DTD family. Homodimer.

The protein localises to the cytoplasm. It carries out the reaction glycyl-tRNA(Ala) + H2O = tRNA(Ala) + glycine + H(+). The enzyme catalyses a D-aminoacyl-tRNA + H2O = a tRNA + a D-alpha-amino acid + H(+). Functionally, an aminoacyl-tRNA editing enzyme that deacylates mischarged D-aminoacyl-tRNAs. Also deacylates mischarged glycyl-tRNA(Ala), protecting cells against glycine mischarging by AlaRS. Acts via tRNA-based rather than protein-based catalysis; rejects L-amino acids rather than detecting D-amino acids in the active site. By recycling D-aminoacyl-tRNA to D-amino acids and free tRNA molecules, this enzyme counteracts the toxicity associated with the formation of D-aminoacyl-tRNA entities in vivo and helps enforce protein L-homochirality. This chain is D-aminoacyl-tRNA deacylase, found in Pseudoalteromonas atlantica (strain T6c / ATCC BAA-1087).